Consider the following 383-residue polypeptide: MGPLFTTIPGAHSGPMRPLPKKHVEPMAVRQLLLGNSTMIRHTCPMSVPLSRQVKEVAAQKPSEDIYKNWQQQQQQQQQQQQQQLDLLFHQRIQISLWPRKQKRRKTEQHSHPFVKKAFRFSAGSGCGRPSSNKMLRSMGGGQRPTGLGSEFFRLLHDLHLLAFAMKRIWIHRRGEATARPRAPEHPAPPATAVRGRDAASQNLKRRPGSGTDGLRLQGAEPSRLLRTYAGGAVIPTGTPERAQPPPPQDPLGRRRWLSRNTWGPWPGTTQPPSPQLLRNDWGSCGFMVPEAARGKVFQDSQEGAHIRRETVSKSVCAEPWRHQRARDPAPTNFPLRCQKQRGASASSGQHEGRVNLVFFIGSPTVIAVPDLQCPTKYSGMLY.

Disordered stretches follow at residues M1 to K21 and A177 to R254.

This sequence belongs to the FAM157 family.

This Homo sapiens (Human) protein is Putative protein FAM157A (FAM157A).